The chain runs to 256 residues: Putative adhesin P1-like protein MPN_132 (256 aa).

Positions 56 to 72 (AVSESQAATSSTTTTAT) are enriched in low complexity. Disordered regions lie at residues 56–115 (AVSE…PYLH) and 149–235 (FGTD…EVVG). Over residues 96–112 (KASTQGSGQTNSQNTSP) the composition is skewed to polar residues. 2 stretches are compositionally biased toward low complexity: residues 155-179 (TQPQPQPLKTTTPVFGTNSGNLGSV) and 211-222 (STSDGNTSSTNN).

This sequence belongs to the adhesin P1 family.

The chain is Putative adhesin P1-like protein MPN_132 from Mycoplasma pneumoniae (strain ATCC 29342 / M129 / Subtype 1) (Mycoplasmoides pneumoniae).